Reading from the N-terminus, the 349-residue chain is MIVLFVDFDYFFAQVEEILNPSLKGKPVVVCVYSGRTKDSGAVATSNYEARKLGIKAGMPIIKAKEIGKDAVFLPMRKEVYQQVSRRVMNIISGYGDKLEIASIDEAYLDITRRVKDFDEAKELARKLKAEVLEKERLRVTVGIGPNKVVAKIIADMNKPDGLGIIYPEEVKDFLYNLDISKVPGVGKITEEILRKVGINRLGDVINKSGELVNLVGKSKANYLLSLANNTYHDPVESREITHRGRYVTLPENTRDLNRILPSLKRSIEEAYSKVDGIPMEIYVVAIMEDLDIVSKGKSFKFGVSQDRALSVAQELLNKILESDKRKLRRVGVRLGKITKSSTLEDFLH.

Residues 3-187 (VLFVDFDYFF…LDISKVPGVG (185 aa)) enclose the UmuC domain. Mg(2+) is bound by residues Asp-7 and Asp-105. Glu-106 is a catalytic residue.

This sequence belongs to the DNA polymerase type-Y family. Monomer. It depends on Mg(2+) as a cofactor.

The protein localises to the cytoplasm. The catalysed reaction is DNA(n) + a 2'-deoxyribonucleoside 5'-triphosphate = DNA(n+1) + diphosphate. Poorly processive, error-prone DNA polymerase involved in untargeted mutagenesis. Copies undamaged DNA at stalled replication forks, which arise in vivo from mismatched or misaligned primer ends. These misaligned primers can be extended by PolIV. Exhibits no 3'-5' exonuclease (proofreading) activity. May be involved in translesional synthesis. This is DNA polymerase IV from Metallosphaera sedula (strain ATCC 51363 / DSM 5348 / JCM 9185 / NBRC 15509 / TH2).